The primary structure comprises 334 residues: Serine/Arginine-related protein 53 (334 aa).

Over residues M1–R13 the composition is skewed to basic and acidic residues. 3 disordered regions span residues M1–G173, L201–L222, and V241–T290. The span at S14–S24 shows a compositional bias: basic residues. Residues P44–Y62 are compositionally biased toward basic and acidic residues. Residues S78–S118 show a composition bias toward basic residues. Basic and acidic residues-rich tracts occupy residues R132–D166, L201–D218, and S247–H262. A coiled-coil region spans residues A180 to A234.

In terms of assembly, interacts (via Arg/Ser-rich domain) with LUC7L3, RBM39 and RSF1. Phosphorylated.

The protein localises to the nucleus speckle. It is found in the nucleus. It localises to the cytoplasm. Its function is as follows. Plays a role in pre-mRNA splicing. Involved in both constitutive and alternative pre-mRNA splicing. May have a role in the recognition of the 3' splice site during the second step of splicing. In Rattus norvegicus (Rat), this protein is Serine/Arginine-related protein 53 (Rsrc1).